A 1492-amino-acid chain; its full sequence is MFSFVDSRTLVLFAATQVILLAVVRCQDEEDVLATGSCVQHGQRYSDKDVWKPEPCQICVCDTGNVLCDEIICEDPKDCPNAEIPFGECCPICPTEQSSTSSGQGVLKGQKGEPGDIKDVVGPKGPPGPQGPSGEQGPRGDRGDKGEKGAPGPRGRDGEPGTPGNPGPVGPPGPPGPPGLGGNFAAQMTGGFDEKAGGAQMGVMQGPMGPMGPRGPPGPTGAPGPQGFQGNPGEPGEPGAGGPMGPRGPPGPAGKPGDDGEAGKPGKSGERGPPGPQGARGFPGTPGLPGVKGHRGYPGLDGSKGEAGAAGAKGEGGATGEAGSPGPMGPRGLPGERGRPGASGAAGARGNDGLPGPAGPPGPVGPAGAPGFPGAPGSKGEAGPTGARGPEGAQGPRGESGTPGSPGPAGASGNPGTDGIPGAKGSSGAPGIAGAPGFPGPRGPPGPQGATGPLGPKGQTGDPGVAGFKGEHGPKGEIGSAGPQGAPGPAGEEGKRGARGEPGAAGPLGPPGERGAPGNRGFPGQDGLAGPKGAPGERGVPGLGGPKGANGDPGRPGEPGLPGARGLTGRPGDAGPQGKVGPSGASGEDGRPGPPGPQGARGQPGVMGFPGPKGANGEPGKAGEKGLLGAPGLRGLPGKDGETGAQGPNGPAGPAGERGEQGPPGPSGFQGLPGPPGSPGEGGKPGDQGVPGEAGAPGLVGPRGERGFPGERGSSGPQGLQGPRGLPGTPGTDGPKGATGPSGPNGAQGPPGLQGMPGERGAAGISGPKGDRGDTGEKGPEGAPGKDGSRGLTGPIGPPGPSGPNGEKGESGPSGPAGIVGARGAPGDRGETGPPGPAGFAGPPGADGQAGLKGDQGESGQKGDAGAPGPQGPSGAPGPQGPTGVNGPKGARGAQGPPGATGFPGAAGRVGPPGPNGNPGPSGAPGSAGKEGPKGARGDAGPTGRAGDPGLQGPAGVPGEKGESGEDGPSGPDGPPGPQGLSGQRGIVGLPGQRGERGFPGLPGPSGEPGKQGGPGSAGDRGPPGPVGPPGLTGPAGEPGREGNAGSDGPPGRDGATGIKGDRGETGPLGAPGAPGAPGAPGPVGPTGKQGDRGESGPQGPLGPSGPAGARGLPGPQGPRGDKGEAGEAGERGQKGHRGFTGLQGLPGPPGTAGDQGASGPAGPGGPRGPPGPVGPSGKDGSNGLPGPIGPPGPRGRGGETGPAGPPGQPGPPGPPGPPGPGIDMSAFAGLSQPEKGPDPMRYMRADQASSSVPQRDVDVEATLKSLNNQIESIRSPDGTKKNPARTCRDLKLCHPEWKSGDYWIDPNQGCTVDAIKVFCNMETGETCVYPNPSKIPKKNWWSAKGKEKKHIWFGETINGGFQFSYGDDSSAPNTANIQMTFLRLLSTDATQNITYHCKNSIAFMDEASGNLKKAVLLQGSNDVEIRAEGNSRFTYNALEDGCKKHTGKWSKTVIEYRTQKTSRLPIVDIAPMDIGGADQEFGVDIGPVCFL.

The signal sequence occupies residues 1–26 (MFSFVDSRTLVLFAATQVILLAVVRC). A propeptide spans 27 to 186 (QDEEDVLATG…PPGLGGNFAA (160 aa)) (N-terminal propeptide). The region spanning 36 to 94 (GSCVQHGQRYSDKDVWKPEPCQICVCDTGNVLCDEIICEDPKDCPNAEIPFGECCPICP) is the VWFC domain. The tract at residues 98-1255 (SSTSSGQGVL…ADQASSSVPQ (1158 aa)) is disordered. 2 stretches are compositionally biased toward basic and acidic residues: residues 110–121 (QKGEPGDIKDVV) and 138–159 (PRGD…RDGE). The span at 163-178 (PGNPGPVGPPGPPGPP) shows a compositional bias: pro residues. Residues 197 to 208 (GGAQMGVMQGPM) are compositionally biased toward low complexity. The interval 206–1219 (GPMGPMGPRG…PGPPGPPGPP (1014 aa)) is triple-helical region. Positions 213 to 222 (PRGPPGPTGA) are enriched in pro residues. Positions 223–234 (PGPQGFQGNPGE) are enriched in low complexity. The segment covering 236 to 245 (GEPGAGGPMG) has biased composition (gly residues). Residues 256 to 270 (PGDDGEAGKPGKSGE) are compositionally biased toward basic and acidic residues. The span at 311 to 320 (GAKGEGGATG) shows a compositional bias: gly residues. 4 stretches are compositionally biased toward low complexity: residues 321-333 (EAGS…PRGL), 340-355 (PGAS…DGLP), 366-376 (PAGAPGFPGAP), and 396-436 (PRGE…AGAP). Residues 438 to 447 (FPGPRGPPGP) show a composition bias toward pro residues. Composition is skewed to low complexity over residues 480 to 490 (SAGPQGAPGPA) and 501 to 517 (EPGA…RGAP). Gly residues predominate over residues 539-548 (GVPGLGGPKG). Composition is skewed to low complexity over residues 627–636 (LLGAPGLRGL) and 645–655 (AQGPNGPAGPA). Proline 664 and proline 673 each carry 4-hydroxyproline. Proline 675 is modified (3-hydroxyproline). Proline 676 and proline 679 each carry 4-hydroxyproline. A compositionally biased stretch (low complexity) spans 711–741 (ERGSSGPQGLQGPRGLPGTPGTDGPKGATGP). A compositionally biased stretch (basic and acidic residues) spans 769–780 (KGDRGDTGEKGP). Low complexity-rich tracts occupy residues 838–850 (AGFA…DGQA) and 894–910 (AQGP…AGRV). Position 912 is a 3-hydroxyproline (proline 912). 3 positions are modified to 4-hydroxyproline: proline 913, proline 919, and proline 925. Low complexity predominate over residues 919–930 (PGPSGAPGSAGK). Residues 1010-1019 (GKQGGPGSAG) are compositionally biased toward gly residues. The segment covering 1105 to 1114 (SGPAGARGLP) has biased composition (low complexity). The segment covering 1120-1134 (RGDKGEAGEAGERGQ) has biased composition (basic and acidic residues). Low complexity-rich tracts occupy residues 1140–1159 (FTGL…QGAS) and 1176–1186 (PSGKDGSNGLP). Proline 1149 bears the 3-hydroxyproline mark. Proline 1186 is modified (4-hydroxyproline). 3-hydroxyproline is present on proline 1191. Proline 1192 is subject to 4-hydroxyproline. Over residues 1204–1221 (AGPPGQPGPPGPPGPPGP) the composition is skewed to pro residues. A 3-hydroxyproline modification is found at proline 1206. A 4-hydroxyproline mark is found at proline 1207 and proline 1210. Residue proline 1212 is modified to 3-hydroxyproline. 4-hydroxyproline is present on residues proline 1213 and proline 1216. Proline 1218 is modified (3-hydroxyproline). At proline 1219 the chain carries 4-hydroxyproline. Positions 1220–1246 (GPGIDMSAFAGLSQPEKGPDPMRYMRA) are nonhelical region (C-terminal). The span at 1236-1245 (KGPDPMRYMR) shows a compositional bias: basic and acidic residues. Residues 1247–1492 (DQASSSVPQR…GVDIGPVCFL (246 aa)) constitute a propeptide, C-terminal propeptide. Positions 1258–1492 (VDVEATLKSL…GVDIGPVCFL (235 aa)) constitute a Fibrillar collagen NC1 domain. 3 disulfide bridges follow: cysteine 1288–cysteine 1320, cysteine 1328–cysteine 1490, and cysteine 1398–cysteine 1443. Residues aspartate 1306, asparagine 1308, glutamine 1309, cysteine 1311, and aspartate 1314 each coordinate Ca(2+). N-linked (GlcNAc...) asparagine glycosylation occurs at asparagine 1393.

This sequence belongs to the fibrillar collagen family. In terms of assembly, homotrimers of alpha 1(II) chains. Post-translationally, contains mostly 4-hydroxyproline. Prolines at the third position of the tripeptide repeating unit (G-X-P) are 4-hydroxylated in some or all of the chains. In terms of processing, contains 3-hydroxyproline at a few sites. This modification occurs on the first proline residue in the sequence motif Gly-Pro-Hyp, where Hyp is 4-hydroxyproline. Lysine residues at the third position of the tripeptide repeating unit (G-X-Y) are 5-hydroxylated in some or all of the chains. Post-translationally, O-glycosylated on hydroxylated lysine residues. The O-linked glycan consists of a Glc-Gal disaccharide.

The protein localises to the secreted. The protein resides in the extracellular space. Its subcellular location is the extracellular matrix. Functionally, type II collagen is specific for cartilaginous tissues. It is essential for the normal embryonic development of the skeleton, for linear growth and for the ability of cartilage to resist compressive forces. This chain is Collagen alpha-1(II) chain, found in Xenopus tropicalis (Western clawed frog).